A 97-amino-acid chain; its full sequence is Small cell adhesion glycoprotein (97 aa).

At 1 to 36 (MTSLLTTPSPREELMTTPILQPTEALSPEDGASTAL) the chain is on the extracellular side. O-linked (GalNAc...) threonine glycosylation occurs at threonine 2. Residue serine 3 is glycosylated (O-linked (GalNAc...) serine). O-linked (GalNAc...) threonine glycosylation is found at threonine 6 and threonine 7. Residue serine 9 is glycosylated (O-linked (GalNAc...) serine). Residues threonine 16, threonine 17, and threonine 23 are each glycosylated (O-linked (GalNAc...) threonine). Residues 37–57 (IAVVITVVFLTLLSVVILIFF) traverse the membrane as a helical; Signal-anchor for type III membrane protein segment. At 58–97 (YLYKNKGSYVTYEPTEGEPSAIVQMESDLAKGSEKEEYFI) the chain is on the cytoplasmic side.

Belongs to the SMAGP family. O-glycosylated. The O-glycan is modified with sialic acid residues. Detected in breast, endometrium, colon and biliary tract. Detected in polarized epithelial structures characterized by cell-cell adhesion (at protein level).

Its subcellular location is the cell membrane. It is found in the cytoplasmic vesicle membrane. In terms of biological role, may play a role in epithelial cell-cell contacts. May play a role in tumor invasiveness and metastasis formation. The sequence is that of Small cell adhesion glycoprotein (SMAGP) from Homo sapiens (Human).